We begin with the raw amino-acid sequence, 449 residues long: Signal recognition particle protein (449 aa).

Residues 109-116, 191-195, and 249-252 each bind GTP; these read GLQGGGKT, DTAGR, and SRID.

The protein belongs to the GTP-binding SRP family. SRP54 subfamily. In terms of assembly, part of the signal recognition particle protein translocation system, which is composed of SRP and FtsY. SRP is a ribonucleoprotein composed of Ffh and a 4.5S RNA molecule.

The protein localises to the cytoplasm. It carries out the reaction GTP + H2O = GDP + phosphate + H(+). Its function is as follows. Involved in targeting and insertion of nascent membrane proteins into the cytoplasmic membrane. Binds to the hydrophobic signal sequence of the ribosome-nascent chain (RNC) as it emerges from the ribosomes. The SRP-RNC complex is then targeted to the cytoplasmic membrane where it interacts with the SRP receptor FtsY. Interaction with FtsY leads to the transfer of the RNC complex to the Sec translocase for insertion into the membrane, the hydrolysis of GTP by both Ffh and FtsY, and the dissociation of the SRP-FtsY complex into the individual components. The sequence is that of Signal recognition particle protein from Rickettsia typhi (strain ATCC VR-144 / Wilmington).